The chain runs to 431 residues: D-inositol 3-phosphate glycosyltransferase (431 aa).

His-21 contributes to the 1D-myo-inositol 3-phosphate binding site. Residues Gln-27–Pro-28 and Gly-35 contribute to the UDP-N-acetyl-alpha-D-glucosamine site. 1D-myo-inositol 3-phosphate-binding positions include Asp-32–Asn-37, Arg-90, Tyr-123, Thr-147, and Arg-167. Positions 241, 246, and 307 each coordinate UDP-N-acetyl-alpha-D-glucosamine. Positions 316, 317, and 319 each coordinate Mg(2+). Residues Glu-329 and Glu-337 each coordinate UDP-N-acetyl-alpha-D-glucosamine. Thr-343 contacts Mg(2+).

The protein belongs to the glycosyltransferase group 1 family. MshA subfamily. In terms of assembly, homodimer.

It catalyses the reaction 1D-myo-inositol 3-phosphate + UDP-N-acetyl-alpha-D-glucosamine = 1D-myo-inositol 2-acetamido-2-deoxy-alpha-D-glucopyranoside 3-phosphate + UDP + H(+). In terms of biological role, catalyzes the transfer of a N-acetyl-glucosamine moiety to 1D-myo-inositol 3-phosphate to produce 1D-myo-inositol 2-acetamido-2-deoxy-glucopyranoside 3-phosphate in the mycothiol biosynthesis pathway. The sequence is that of D-inositol 3-phosphate glycosyltransferase from Saccharomonospora viridis (strain ATCC 15386 / DSM 43017 / JCM 3036 / CCUG 5913 / NBRC 12207 / NCIMB 9602 / P101) (Thermoactinomyces viridis).